We begin with the raw amino-acid sequence, 135 residues long: Large ribosomal subunit protein uL16c (135 aa).

It belongs to the universal ribosomal protein uL16 family. As to quaternary structure, part of the 50S ribosomal subunit.

Its subcellular location is the plastid. The protein localises to the chloroplast. The polypeptide is Large ribosomal subunit protein uL16c (Morus indica (Mulberry)).